We begin with the raw amino-acid sequence, 311 residues long: MAGPLWRTAAFVQRHRTGLLVGSCAGLFGVPISYHLFPDPVVQWLYQYWPQGQPAPLPPQLQSLFQEVLQDIGVPSGHCYKPFTTFTFQPVSAGFPRLPAGAVVGIPASFLGDLVINTNHPVVIHGHTVDWRSPAGARLRASLTLSREAQKFALAREVVYLESSTTAVHALLAPACLAGTWALGVGAKYTLGLHAGPMNLRAAFSLVAAVAGFVAYAFSQDSLTHAVESWLDRRTASLSAAYACGGVEFYEKLLSGNLALRSLLGKDGEKLYTPSGNIVPRHLFRIKHLPYTTRRDSVLQMWRGMLNPGRS.

Residues 1–17 (MAGPLWRTAAFVQRHRT) are Mitochondrial matrix-facing. The chain crosses the membrane as a helical span at residues 18 to 38 (GLLVGSCAGLFGVPISYHLFP). Residues 39–166 (DPVVQWLYQY…EVVYLESSTT (128 aa)) lie on the Mitochondrial intermembrane side of the membrane. Residues 167-187 (AVHALLAPACLAGTWALGVGA) form a helical membrane-spanning segment. The Mitochondrial matrix portion of the chain corresponds to 188–197 (KYTLGLHAGP). A helical membrane pass occupies residues 198 to 218 (MNLRAAFSLVAAVAGFVAYAF). Residues 219-311 (SQDSLTHAVE…WRGMLNPGRS (93 aa)) are Mitochondrial intermembrane-facing.

It belongs to the TMEM177 family. In terms of assembly, found in a complex with COX20, COA6, MT-CO2/COX2, COX18, SCO1 and SCO2. Interacts with COX20. Interacts with COX1, MT-CO2/COX2, SCO1 and SCO2 in a COX20-dependent manner.

It localises to the mitochondrion inner membrane. In terms of biological role, plays a role in the early steps of cytochrome c oxidase subunit II (MT-CO2/COX2) maturation and is required for the stabilization of COX20 and the newly synthesized MT-CO2/COX2 protein. In Homo sapiens (Human), this protein is Transmembrane protein 177 (TMEM177).